The chain runs to 1366 residues: DNA-directed RNA polymerase subunit beta' (1366 aa).

A compositionally biased stretch (basic residues) spans M1 to H23. The interval M1 to F37 is disordered. The Zn(2+) site is built by C248, C315, C322, and C325. The disordered stretch occupies residues T1304 to G1366. A compositionally biased stretch (low complexity) spans L1354 to G1366.

It belongs to the RNA polymerase beta' chain family. RpoC2 subfamily. In cyanobacteria the RNAP catalytic core is composed of 2 alpha, 1 beta, 1 beta', 1 gamma and 1 omega subunit. When a sigma factor is associated with the core the holoenzyme is formed, which can initiate transcription. It depends on Zn(2+) as a cofactor.

The catalysed reaction is RNA(n) + a ribonucleoside 5'-triphosphate = RNA(n+1) + diphosphate. Its function is as follows. DNA-dependent RNA polymerase catalyzes the transcription of DNA into RNA using the four ribonucleoside triphosphates as substrates. This is DNA-directed RNA polymerase subunit beta' from Prochlorococcus marinus subsp. pastoris (strain CCMP1986 / NIES-2087 / MED4).